A 256-amino-acid chain; its full sequence is 1-(5-phosphoribosyl)-5-[(5-phosphoribosylamino)methylideneamino] imidazole-4-carboxamide isomerase (256 aa).

Residue Asp-8 is the Proton acceptor of the active site. Residue Asp-129 is the Proton donor of the active site.

Belongs to the HisA/HisF family.

It localises to the cytoplasm. The enzyme catalyses 1-(5-phospho-beta-D-ribosyl)-5-[(5-phospho-beta-D-ribosylamino)methylideneamino]imidazole-4-carboxamide = 5-[(5-phospho-1-deoxy-D-ribulos-1-ylimino)methylamino]-1-(5-phospho-beta-D-ribosyl)imidazole-4-carboxamide. The protein operates within amino-acid biosynthesis; L-histidine biosynthesis; L-histidine from 5-phospho-alpha-D-ribose 1-diphosphate: step 4/9. The polypeptide is 1-(5-phosphoribosyl)-5-[(5-phosphoribosylamino)methylideneamino] imidazole-4-carboxamide isomerase (Picosynechococcus sp. (strain ATCC 27264 / PCC 7002 / PR-6) (Agmenellum quadruplicatum)).